We begin with the raw amino-acid sequence, 85 residues long: Small ribosomal subunit protein bS16 (85 aa).

This sequence belongs to the bacterial ribosomal protein bS16 family.

The polypeptide is Small ribosomal subunit protein bS16 (Rubrobacter xylanophilus (strain DSM 9941 / JCM 11954 / NBRC 16129 / PRD-1)).